A 1810-amino-acid chain; its full sequence is Trinucleotide repeat-containing gene 6B protein (1810 aa).

The segment covering 1-22 has biased composition (acidic residues); it reads MQTNEGEVEEESSSQVEQEDFV. 4 disordered regions span residues 1–221, 235–1080, 1141–1196, and 1293–1329; these read MQTN…PNPI, EEWP…KKQM, MRKD…SSPG, and ALQQQQQQQQQQQRQPSMKHSPSHPVGPKPHLDNMVP. Positions 33–75 form a coiled coil; the sequence is GEESKQEKEQEREEQLMEDKKRKKEDKKKKEATQKVTEQKTKV. Basic and acidic residues-rich tracts occupy residues 34-52 and 60-77; these read EESKQEKEQEREEQLMEDK and KKKEATQKVTEQKTKVPE. An interaction with argonaute proteins region spans residues 37 to 1028; it reads KQEKEQEREE…AMKPNSKSMQ (992 aa). Low complexity predominate over residues 88 to 106; that stretch reads AASPIGSSPSPPVNGGNNA. Over residues 123-139 the composition is skewed to basic and acidic residues; it reads MPREVPPRFRCQQDHKV. The segment covering 165-174 has biased composition (low complexity); it reads APGANPNNNA. The span at 180–190 shows a compositional bias: polar residues; it reads LLQSESGTAPE. Composition is skewed to low complexity over residues 207–220 and 248–260; these read GPGASSNSGASPNP and SSENTTDNNSASN. Composition is skewed to polar residues over residues 261-290 and 306-327; these read PGSEKSSLPGSTTSNKGKGSQCQAASSGNE and QPPNSTSDSNNGLGNWRSTSGQ. Composition is skewed to low complexity over residues 335-346, 363-380, and 416-425; these read GFSNFNPNSNPS, ETESSSSSAQVSTVGQAS, and NSLNLSSPNP. Over residues 438-451 the composition is skewed to polar residues; that stretch reads GNTSRSTDAPSQST. The span at 475-486 shows a compositional bias: low complexity; it reads SGQSNSGNNGNN. Polar residues-rich tracts occupy residues 504–528, 564–575, 611–623, and 655–667; these read GSKSDSWDNNNRSTGGSWNFGPQDN, GPNQPNSSTGAW, TGSNHKAGSSDSH, and LSNTGWGQTQIKQ. The span at 675 to 688 shows a compositional bias: basic and acidic residues; it reads EVPRPEGKSDKGTE. 2 stretches are compositionally biased toward polar residues: residues 774-783 and 793-804; these read QPNQGWTSGK and VKNNNWESSANK. Gly residues predominate over residues 809–824; that stretch reads WGEGGQNEIGTWGNGG. Polar residues predominate over residues 846–857; that stretch reads TGRQPNSWNKQH. Serine 913 carries the phosphoserine modification. Composition is skewed to polar residues over residues 934–950, 964–975, 1004–1027, 1057–1072, and 1175–1195; these read NSYNYKNVNLWDKNSQG, TGKSASVWSKST, ASTTGWGNTPANAPNAMKPNSKSM, TAGSQGSTSSHNSASW, and GNSTAQSRGLHTPVQPLSSSP. Residues 1191-1700 form a silencing domain; interaction with CNOT1 and PAN3 region; sequence LSSSPGLRAQ…LAEFATEDEV (510 aa). A compositionally biased stretch (low complexity) spans 1295–1307; sequence QQQQQQQQQQQRQ. At serine 1409 the chain carries Phosphoserine. Residue threonine 1426 is modified to Phosphothreonine. Residue serine 1438 is modified to Phosphoserine. Position 1441 is a phosphothreonine (threonine 1441). The segment at 1449 to 1467 is PABPC1-interacting motif-2 (PAM2); it reads SNASWPPEFQPGVPWKGIQ. Residues 1568–1619 form a disordered region; that stretch reads SSRNTTPLTRPPPGLTNPKPASPWSSTAPRSVRGWGTQDSRIASASTWSDGG. Over residues 1604–1617 the composition is skewed to polar residues; the sequence is TQDSRIASASTWSD. Residues 1625–1697 form the RRM domain; that stretch reads YWLVLHNLTP…TTILAEFATE (73 aa). 2 disordered regions span residues 1706 to 1740 and 1786 to 1810; these read QAQPPTPAATPSAPATGWQSLETSQNQADPVGPAL and EDPHRMGSPAPLLPGDLLGGGSDSI. A compositionally biased stretch (polar residues) spans 1722-1733; it reads GWQSLETSQNQA. Low complexity predominate over residues 1792 to 1801; it reads GSPAPLLPGD. Phosphoserine occurs at positions 1793 and 1809.

The protein belongs to the GW182 family. In terms of assembly, interacts with AGO1, AGO2, AGO3 and AGO4. Interacts with CNOT1; the interaction mediates the association with the CCR4-NOT complex. Interacts with PAN3; the interaction mediates the association with the PAN complex. Interacts with MOV10; the interaction is direct and RNA-dependent.

The protein localises to the cytoplasm. Its subcellular location is the P-body. Its function is as follows. Plays a role in RNA-mediated gene silencing by both micro-RNAs (miRNAs) and short interfering RNAs (siRNAs). Required for miRNA-dependent translational repression and siRNA-dependent endonucleolytic cleavage of complementary mRNAs by argonaute family proteins. As scaffolding protein associates with argonaute proteins bound to partially complementary mRNAs and simultaneously can recruit CCR4-NOT and PAN deadenylase complexes. This chain is Trinucleotide repeat-containing gene 6B protein (Tnrc6b), found in Mus musculus (Mouse).